Reading from the N-terminus, the 643-residue chain is DNA gyrase subunit B (643 aa).

Residues 428–542 (SEIFLVEGDS…AGYVYIAQPP (115 aa)) enclose the Toprim domain. Positions 434, 507, and 509 each coordinate Mg(2+).

This sequence belongs to the type II topoisomerase GyrB family. In terms of assembly, heterotetramer, composed of two GyrA and two GyrB chains. In the heterotetramer, GyrA contains the active site tyrosine that forms a transient covalent intermediate with DNA, while GyrB binds cofactors and catalyzes ATP hydrolysis. Requires Mg(2+) as cofactor. Mn(2+) serves as cofactor. It depends on Ca(2+) as a cofactor.

The protein localises to the cytoplasm. The enzyme catalyses ATP-dependent breakage, passage and rejoining of double-stranded DNA.. Functionally, a type II topoisomerase that negatively supercoils closed circular double-stranded (ds) DNA in an ATP-dependent manner to modulate DNA topology and maintain chromosomes in an underwound state. Negative supercoiling favors strand separation, and DNA replication, transcription, recombination and repair, all of which involve strand separation. Also able to catalyze the interconversion of other topological isomers of dsDNA rings, including catenanes and knotted rings. Type II topoisomerases break and join 2 DNA strands simultaneously in an ATP-dependent manner. The chain is DNA gyrase subunit B from Staphylococcus epidermidis (strain ATCC 35984 / DSM 28319 / BCRC 17069 / CCUG 31568 / BM 3577 / RP62A).